A 548-amino-acid polypeptide reads, in one-letter code: MAEQQTTELTNIDLEAGSEWRFELEADENIALRTLSSDPVFINSQELTPSAWYPIYRHTKSALYAPTSARIQVTNLPASHYTSTSTVQPQLLNLHLAMERQRILSKRGMEQRGPRVMIMGPQSSGKTTVMKNLVNLALGTGMGWTPGAIGLDPSSPPNLIPGSLSISTPSHPIPTHHLAHPLGSPPASTAANTISGDVETASWWLGALEPTNKNAEVWRVLVEHMAEAWGMRCEKDKIANISGLFLDTPAAFTVPTLGTKKDDPKARYTLVSHAIQAFDIDTIIVIGHEKLHIDLSRLPLVQSRQLNVIRIPKSGGAVDLDDHDRETAHIFQVRTYFYGEPPLPPQISSLVGKMVSLDFELSPYSFQIPWSRLVVLRVGEENSAPSSALPLGSSKILSPLRLTRVDPSGPGHVVRLLNRVLALVDVKPEDRIVPAKESEVKEEVKEEKNEKDGEIKQDGEGEKKGEGKGEGEGEGEGKDGEEEGEAEGEDDEEEVPFREEIGTREVMGFIVITAIDTFARKYTVLSPTPGRLPTTVAIAGAIEWVDSA.

ATP is bound by residues Glu19, Lys60, and 123–128 (SSGKTT). A compositionally biased stretch (basic and acidic residues) spans 437 to 478 (ESEVKEEVKEEKNEKDGEIKQDGEGEKKGEGKGEGEGEGEGK). The interval 437–500 (ESEVKEEVKE…DEEEVPFREE (64 aa)) is disordered. Residues 479-494 (DGEEEGEAEGEDDEEE) are compositionally biased toward acidic residues.

It belongs to the Clp1 family. Clp1 subfamily. As to quaternary structure, component of a pre-mRNA cleavage factor complex. Interacts directly with PCF11.

The protein resides in the nucleus. Its function is as follows. Required for endonucleolytic cleavage during polyadenylation-dependent pre-mRNA 3'-end formation. The protein is mRNA cleavage and polyadenylation factor CLP1 of Cryptococcus neoformans var. neoformans serotype D (strain JEC21 / ATCC MYA-565) (Filobasidiella neoformans).